We begin with the raw amino-acid sequence, 403 residues long: Argininosuccinate synthase (403 aa).

Residues 13 to 21 and alanine 40 each bind ATP; that span reads AYSGGLDTS. Tyrosine 91 and serine 96 together coordinate L-citrulline. Glycine 121 provides a ligand contact to ATP. L-aspartate-binding residues include threonine 123, asparagine 127, and aspartate 128. Asparagine 127 is an L-citrulline binding site. Arginine 131, serine 180, serine 189, glutamate 265, and tyrosine 277 together coordinate L-citrulline.

The protein belongs to the argininosuccinate synthase family. Type 1 subfamily. In terms of assembly, homotetramer.

The protein resides in the cytoplasm. The catalysed reaction is L-citrulline + L-aspartate + ATP = 2-(N(omega)-L-arginino)succinate + AMP + diphosphate + H(+). The protein operates within amino-acid biosynthesis; L-arginine biosynthesis; L-arginine from L-ornithine and carbamoyl phosphate: step 2/3. The sequence is that of Argininosuccinate synthase from Leptospira borgpetersenii serovar Hardjo-bovis (strain JB197).